A 480-amino-acid chain; its full sequence is MTYGEEEPVSPMARVFQSPGIDLCAVTIMGFKTKINPDVVLDALKQNVSKHPRFSSILSDNGAKWIETEVNVEDHVIVPYIDAEEIGEGGQSFIDDYMSRLTMIPLDRSRPLWDIHILNVKTSEAEAVGFIRSHHSLGDGMSLISLMLACTHKTSDPDMFSNAIPSMKRRATMSHSLKTKGWFLRSIFTIGSTMRLLWNTTIDMLLLLATVLFLKDTKTPLKAGADVRSNPKRFYHRIISLDDIKLIKNAMNMTINDVLFGITQASLSHYLNRQYGTKKEEDGALTSYRNNLPDGIRFRVACTVNLRSDIGFKPLADMMVKDSKCRWGNYFSFIFLPFTIGLQTDPLVYLKMSKSMMARKKHSYHAALVYFIIKIVLKVFGAKAAAELFDRPVRNTTTCVSNVIGPMEEISFRGHPVSYIAPSSYGHSHALLIHLMSYADKMIISLAYDPTVISDPHKICDDMEESLKAMKASLCERGLL.

The Cytoplasmic segment spans residues 1–193 (MTYGEEEPVS…LRSIFTIGST (193 aa)). H135 functions as the Proton acceptor in the catalytic mechanism. Residues 194–214 (MRLLWNTTIDMLLLLATVLFL) traverse the membrane as a helical segment. Residues 215 to 329 (KDTKTPLKAG…VKDSKCRWGN (115 aa)) are Lumenal-facing. N252 carries N-linked (GlcNAc...) asparagine glycosylation. A helical transmembrane segment spans residues 330–350 (YFSFIFLPFTIGLQTDPLVYL). The Cytoplasmic segment spans residues 351–365 (KMSKSMMARKKHSYH). The helical transmembrane segment at 366-386 (AALVYFIIKIVLKVFGAKAAA) threads the bilayer. Residues 387 to 480 (ELFDRPVRNT…KASLCERGLL (94 aa)) lie on the Lumenal side of the membrane. A glycan (N-linked (GlcNAc...) asparagine) is linked at N395.

This sequence in the N-terminal section; belongs to the long-chain O-acyltransferase family. Expressed in roots, stems, leaves, flowers and siliques.

Its subcellular location is the cell membrane. The protein localises to the endoplasmic reticulum membrane. The protein resides in the golgi apparatus membrane. It carries out the reaction an acyl-CoA + a 1,2-diacyl-sn-glycerol = a triacyl-sn-glycerol + CoA. The enzyme catalyses a long chain fatty alcohol + a fatty acyl-CoA = a wax ester + CoA. The protein operates within glycerolipid metabolism; triacylglycerol biosynthesis. Its pathway is lipid metabolism. Its function is as follows. Bifunctional wax ester synthase/diacylglycerol acyltransferase that uses acyl-CoAs with 14, 16 and 18 carbons as substrates, preferably in combination with 16:0ol alcohol. Involved in cuticular wax biosynthesis. The protein is Wax ester synthase/diacylglycerol acyltransferase 7 of Arabidopsis thaliana (Mouse-ear cress).